We begin with the raw amino-acid sequence, 389 residues long: Chalcone synthase (389 aa).

Residues Cys-164, His-303, and Asn-336 contribute to the active site.

It belongs to the thiolase-like superfamily. Chalcone/stilbene synthases family. Homodimer. In terms of tissue distribution, mainly expressed in flowers, to a lower extent in young leaves, and barely in mature leaves and twigs.

The catalysed reaction is (E)-4-coumaroyl-CoA + 3 malonyl-CoA + 3 H(+) = 2',4,4',6'-tetrahydroxychalcone + 3 CO2 + 4 CoA. Its pathway is secondary metabolite biosynthesis; flavonoid biosynthesis. The primary product of this enzyme is 4,2',4',6'-tetrahydroxychalcone (also termed naringenin-chalcone or chalcone) which can under specific conditions spontaneously isomerize into naringenin. The polypeptide is Chalcone synthase (Rhododendron dauricum (Azalea daurica)).